A 141-amino-acid chain; its full sequence is Lutropin subunit beta (141 aa).

An N-terminal signal peptide occupies residues 1–21; sequence MERYQELTVLLLLLLLEGGSG. Cystine bridges form between cysteine 30–cysteine 78, cysteine 44–cysteine 93, cysteine 47–cysteine 131, cysteine 55–cysteine 109, cysteine 59–cysteine 111, and cysteine 114–cysteine 121. Residue asparagine 34 is glycosylated (N-linked (GlcNAc...) asparagine).

This sequence belongs to the glycoprotein hormones subunit beta family. In terms of assembly, heterodimer of a common alpha chain and a unique beta chain which confers biological specificity to thyrotropin, lutropin, follitropin and gonadotropin.

The protein resides in the secreted. Its function is as follows. Promotes spermatogenesis and ovulation by stimulating the testes and ovaries to synthesize steroids. The protein is Lutropin subunit beta (LHB) of Monodelphis domestica (Gray short-tailed opossum).